We begin with the raw amino-acid sequence, 254 residues long: UPF0246 protein lpp1320 (254 aa).

The protein belongs to the UPF0246 family.

This chain is UPF0246 protein lpp1320, found in Legionella pneumophila (strain Paris).